An 880-amino-acid polypeptide reads, in one-letter code: Alanine--tRNA ligase (880 aa).

Zn(2+) contacts are provided by histidine 567, histidine 571, cysteine 669, and histidine 673.

The protein belongs to the class-II aminoacyl-tRNA synthetase family. It depends on Zn(2+) as a cofactor.

It localises to the cytoplasm. It carries out the reaction tRNA(Ala) + L-alanine + ATP = L-alanyl-tRNA(Ala) + AMP + diphosphate. Catalyzes the attachment of alanine to tRNA(Ala) in a two-step reaction: alanine is first activated by ATP to form Ala-AMP and then transferred to the acceptor end of tRNA(Ala). Also edits incorrectly charged Ser-tRNA(Ala) and Gly-tRNA(Ala) via its editing domain. This chain is Alanine--tRNA ligase, found in Bacillus mycoides (strain KBAB4) (Bacillus weihenstephanensis).